A 207-amino-acid polypeptide reads, in one-letter code: Interleukin-6 (207 aa).

Positions 1–18 (MKFFSIASLGLLLVVATA) are cleaved as a signal peptide. The disordered stretch occupies residues 26–47 (REDGENSVTRNKPTRASSGKTR). Over residues 31-44 (NSVTRNKPTRASSG) the composition is skewed to polar residues. A disulfide bond links C65 and C71. S74 is modified (phosphoserine). C94 and C104 form a disulfide bridge.

It belongs to the IL-6 superfamily. In terms of assembly, component of a hexamer of two molecules each of IL6, IL6R and IL6ST; first binds to IL6R to associate with the signaling subunit IL6ST. Interacts with IL6R (via the N-terminal ectodomain); this interaction may be affected by IL6R-binding with SORL1, hence decreasing IL6 cis signaling. Interacts with SORL1 (via the N-terminal ectodomain); this interaction leads to IL6 internalization and lysosomal degradation. May form a trimeric complex with the soluble SORL1 ectodomain and soluble IL6R receptor; this interaction might stabilize circulating IL6, hence promoting IL6 trans signaling.

The protein localises to the secreted. Its function is as follows. Cytokine with a wide variety of biological functions in immunity, tissue regeneration, and metabolism. Binds to IL6R, then the complex associates to the signaling subunit IL6ST/gp130 to trigger the intracellular IL6-signaling pathway. The interaction with the membrane-bound IL6R and IL6ST stimulates 'classic signaling', whereas the binding of IL6 and soluble IL6R to IL6ST stimulates 'trans-signaling'. Alternatively, 'cluster signaling' occurs when membrane-bound IL6:IL6R complexes on transmitter cells activate IL6ST receptors on neighboring receiver cells. IL6 is a potent inducer of the acute phase response. Rapid production of IL6 contributes to host defense during infection and tissue injury, but excessive IL6 synthesis is involved in disease pathology. In the innate immune response, is synthesized by myeloid cells, such as macrophages and dendritic cells, upon recognition of pathogens through toll-like receptors (TLRs) at the site of infection or tissue injury. In the adaptive immune response, is required for the differentiation of B cells into immunoglobulin-secreting cells. Plays a major role in the differentiation of CD4(+) T cell subsets. Essential factor for the development of T follicular helper (Tfh) cells that are required for the induction of germinal-center formation. Required to drive naive CD4(+) T cells to the Th17 lineage. Also required for proliferation of myeloma cells and the survival of plasmablast cells. In terms of biological role, acts as an essential factor in bone homeostasis and on vessels directly or indirectly by induction of VEGF, resulting in increased angiogenesis activity and vascular permeability. Induces, through 'trans-signaling' and synergistically with IL1B and TNF, the production of VEGF. Involved in metabolic controls, is discharged into the bloodstream after muscle contraction increasing lipolysis and improving insulin resistance. 'Trans-signaling' in central nervous system also regulates energy and glucose homeostasis. Mediates, through GLP-1, crosstalk between insulin-sensitive tissues, intestinal L cells and pancreatic islets to adapt to changes in insulin demand. Also acts as a myokine. Plays a protective role during liver injury, being required for maintenance of tissue regeneration. Also has a pivotal role in iron metabolism by regulating HAMP/hepcidin expression upon inflammation or bacterial infection. Through activation of IL6ST-YAP-NOTCH pathway, induces inflammation-induced epithelial regeneration. This is Interleukin-6 (IL6) from Marmota monax (Woodchuck).